The sequence spans 71 residues: MASNNTASIAQARKLVEQLKMEANIDRIKVSKAAADLMAYCEAHAKEDPLLTPVPASENPFREKKFFCAIL.

The residue at position 2 (A2) is an N-acetylalanine. C68 is modified (cysteine methyl ester). C68 is lipidated: S-geranylgeranyl cysteine. The propeptide at A69–L71 is removed in mature form.

The protein belongs to the G protein gamma family. In terms of assembly, g proteins are composed of 3 units, alpha, beta and gamma. In this context, interacts with GNB2. The heterodimer formed by GNB1 and GNG2 interacts with ARHGEF5. The heterodimer formed by GNB1 and GNG2 interacts with GRK2. Component of the TAS2R14-GNAI1 complex, consisting of TAS2R14, GNAI1, GNB1 and GNG2. Forms complexes with TAS2R14 and G-proteins; these complexes play a role in the perception of bitterness. Component of the TAS2R14-GNAT3 complex, consisting of TAS2R14, GNAT3, GNB1 and GNG2. Component of the TAS2R14-GNAS2 complex, consisting of TAS2R14, GNAS2, GNB1 and GNG2. As to expression, adrenal gland and brain.

It localises to the cell membrane. Functionally, guanine nucleotide-binding proteins (G proteins) are involved as a modulator or transducer in various transmembrane signaling systems. The beta and gamma chains are required for the GTPase activity, for replacement of GDP by GTP, and for G protein-effector interaction. The protein is Guanine nucleotide-binding protein G(I)/G(S)/G(O) subunit gamma-2 (GNG2) of Bos taurus (Bovine).